The chain runs to 510 residues: MFLCVPHYTSITFPQLNDGRKVLRFGSYQRRGFRILAMSSSVSEASNYITAAPIFLPDGPWKQIPGGVTAAKGFKAAGLYGGLRAKGEKPDLALVACDVDAISAGAFTTNVVAAAPVVYCKNALDMSKTARAVLINAGQANAATAKRPSNDYQGDAGYQDVIECANALAKLLQMRPEEVLIESTGVIGHRIKKDALLNSLPKLVSSLSSSTEGADSAAVAITTTDLVSKSVAIESEVGGTNIRVGGMAKGSGMIHPNMATMLGVRLCFLHVLFCKVVTTDALVASDVWRKMVQIAVNRSFNQITVDGDTSTNDTVIALASGLSGSTRISSLISHEAIQLQACLDAVMQGLAKSIAWDGEGATCLIEGSSLVNAATIRIWRYRGHMAMPTGPLRIISLHLWYWAINHVELCFAAVYGRDPNWGRIACAAGYAGIPFQPNKLHISLGEILLMEGGQPLPFDRAAASNYLKKAGETHGTVGIHISIGDGAGRGQAWGCDLSYDYVKINAEYTT.

The substrate site is built by Thr-223, Lys-249, Glu-359, Asn-505, and Thr-510.

It belongs to the ArgJ family. In terms of assembly, heterodimer of an alpha and a beta chain.

Its subcellular location is the plastid. The protein localises to the chloroplast. The enzyme catalyses N(2)-acetyl-L-ornithine + L-glutamate = N-acetyl-L-glutamate + L-ornithine. It carries out the reaction L-glutamate + acetyl-CoA = N-acetyl-L-glutamate + CoA + H(+). It functions in the pathway amino-acid biosynthesis; L-arginine biosynthesis; L-ornithine and N-acetyl-L-glutamate from L-glutamate and N(2)-acetyl-L-ornithine (cyclic): step 1/1. It participates in amino-acid biosynthesis; L-arginine biosynthesis; N(2)-acetyl-L-ornithine from L-glutamate: step 1/4. Catalyzes two activities which are involved in the cyclic version of arginine biosynthesis: the synthesis of acetylglutamate from glutamate and acetyl-CoA, and of ornithine by transacetylation between acetylornithine and glutamate. The chain is Arginine biosynthesis bifunctional protein ArgJ, chloroplastic from Vitis vinifera (Grape).